Consider the following 124-residue polypeptide: ATP synthase epsilon chain (124 aa).

Positions 99–118 are enriched in basic and acidic residues; sequence LEQAKTEGDAHAERRADVRL. The tract at residues 99–124 is disordered; it reads LEQAKTEGDAHAERRADVRLRAAAGR.

It belongs to the ATPase epsilon chain family. F-type ATPases have 2 components, CF(1) - the catalytic core - and CF(0) - the membrane proton channel. CF(1) has five subunits: alpha(3), beta(3), gamma(1), delta(1), epsilon(1). CF(0) has three main subunits: a, b and c.

It is found in the cell membrane. Produces ATP from ADP in the presence of a proton gradient across the membrane. The protein is ATP synthase epsilon chain (atpC) of Streptomyces coelicolor (strain ATCC BAA-471 / A3(2) / M145).